The following is a 312-amino-acid chain: Tumor necrosis factor receptor type 1-associated DEATH domain protein (312 aa).

A Nuclear export signal motif is present at residues 147–163 (LRDEELAELEDALRNLK). Residues 170–195 (GGDGEVASAPLQPPVPSLSEVKPPPP) are disordered. Residues 179–289 (PLQPPVPSLS…ATLQRLVEAL (111 aa)) enclose the Death domain. The span at 180 to 195 (LQPPVPSLSEVKPPPP) shows a compositional bias: pro residues. The segment at 222–289 (FARSVGLKWR…ATLQRLVEAL (68 aa)) is interaction with KRT14 and KRT18. Positions 231 to 244 (RKVGRSLQRGCRAL) match the Nuclear localization signal motif. (Microbial infection) N-beta-linked (GlcNAc) arginine glycans are attached at residues R235 and R245.

Stimulation of TNF-alpha receptor TNFRSF1A leads to the formation of two distinct signaling complexes. Plasma membrane-bound complex I is composed of TNFRSF1A, TRADD, RIPK1, TRAF2 and BIRC2/c-IAP1 or BIRC3 which interacts with CHUCK/IKK-alpha, IKBKB/IKK-beta and IKBKG/IKK-gamma promoting cell survival. Subsequently, TRADD, RIPK1 and TRAF2 dissociate from TNFRSF1A and form cytoplasmic complex II with FADD and caspase CASP8 promoting cell apoptosis. Within complex I, interacts with TNFRSF1A/TNFR1, TRAF2 and kinase RIPK1. Within complex I, interacts with TRPC4AP; the interaction promotes NF-kappa B activation. UXT1 associates with complex I; the interaction prevents the formation of complex II. Within complex I Interacts with scaffold protein DAB2IP. Interacts with autophagy receptor SQSTM1. Interacts with E3 ligase TRIP12. Interacts with kinase HIPK2. Interacts with keratin KRT14. Interacts with keratin KRT18. Interacts with keratins KRT16 and KRT17. Interacts with FADD. Interacts with TOMM70. Interacts with TMC8; the interaction impairs the formation of complex I and facilites complex II formation. (Microbial infection) Glycosylated at Arg-235 by enteropathogenic E.coli protein NleB1, C.rodentium protein NleB and S.typhimurium proteins Ssek1 and Ssek3: arginine GlcNAcylation prevents homotypic/heterotypic death domain interactions and assembly of the oligomeric TNFRSF1A/TNFR1 complex, thereby disrupting TNF signaling. In terms of tissue distribution, found in all examined tissues.

It is found in the nucleus. The protein localises to the cytoplasm. The protein resides in the cytoskeleton. Functionally, adapter molecule for TNFRSF1A/TNFR1 that specifically associates with the cytoplasmic domain of activated TNFRSF1A/TNFR1 mediating its interaction with FADD. Overexpression of TRADD leads to two major TNF-induced responses, apoptosis and activation of NF-kappa-B. The nuclear form acts as a tumor suppressor by preventing ubiquitination and degradation of isoform p19ARF/ARF of CDKN2A by TRIP12: acts by interacting with TRIP12, leading to disrupt interaction between TRIP12 and isoform p19ARF/ARF of CDKN2A. This chain is Tumor necrosis factor receptor type 1-associated DEATH domain protein, found in Homo sapiens (Human).